Here is a 321-residue protein sequence, read N- to C-terminus: Cytochrome c biogenesis protein CcsA (321 aa).

7 helical membrane passes run 17–37, 43–63, 71–91, 143–163, 225–245, 258–273, and 286–306; these read IISIVITIHLVTLLVHEIVGL, KGMIAAFFCITGLLVTRWIYS, LYESLMFLSWSFSIIHMVPKI, MLLSYAALLCGSLLSVALLVI, VISLGFTFLTIGILSGAVWAN, ETWAFITWTIFAIYLH, and AIVASMGFLIIWICYFGVNLL.

Belongs to the CcmF/CycK/Ccl1/NrfE/CcsA family. As to quaternary structure, may interact with Ccs1.

It localises to the plastid. The protein localises to the chloroplast thylakoid membrane. In terms of biological role, required during biogenesis of c-type cytochromes (cytochrome c6 and cytochrome f) at the step of heme attachment. The chain is Cytochrome c biogenesis protein CcsA from Liriodendron tulipifera (Tuliptree).